The primary structure comprises 415 residues: Esterase FrsA (415 aa).

The tract at residues 1–23 is disordered; the sequence is MANRNLSESLFKPRQKHQETSTL.

Belongs to the FrsA family.

The catalysed reaction is a carboxylic ester + H2O = an alcohol + a carboxylate + H(+). Functionally, catalyzes the hydrolysis of esters. This is Esterase FrsA from Photorhabdus laumondii subsp. laumondii (strain DSM 15139 / CIP 105565 / TT01) (Photorhabdus luminescens subsp. laumondii).